The sequence spans 145 residues: MNFKYIVAVSFLIASAYARSVQNDEQSLSQRDVLEEEESLREIRGIGGKILSGLKTALKGAAKELASTYLHRKRIAEDHEVMKRLEAVMRDLDSLDHPEEASERETRGFNQEEIANLFTKKEKRILGPVLGLVGNALGGLIKKIG.

The signal sequence occupies residues 1-18 (MNFKYIVAVSFLIASAYA). 2 propeptides span residues 19–43 (RSVQ…LREI) and 74–124 (RIAE…KEKR). Isoleucine 144 carries the post-translational modification Isoleucine amide.

This sequence belongs to the bombinin family. Expressed by the skin glands.

The protein resides in the secreted. In terms of biological role, maximin-3 shows antibacterial activity against both Gram-positive and Gram-negative bacteria. It also shows antimicrobial activity against the fungus C.albicans, but not against A.flavus nor P.uticale. It has little hemolytic activity. It possess a significant cytotoxicity against tumor cell lines. It possess a significant anti-HIV activity. It shows high spermicidal activity. Functionally, maximin-H3 shows antibacterial activity against both Gram-positive and Gram-negative bacteria. It also shows antimicrobial activity against the fungus C.albicans. Shows strong hemolytic activity. This chain is Maximins 3/H3 type 1, found in Bombina maxima (Giant fire-bellied toad).